We begin with the raw amino-acid sequence, 155 residues long: Ribonuclease 2B (155 aa).

An N-terminal signal peptide occupies residues 1–25 (MGLKLLESRLCLLLLLGLVLTLVSC). H38 functions as the Proton acceptor in the catalytic mechanism. 4 disulfides stabilise this stretch: C47/C106, C61/C118, C79/C133, and C86/C94. 62–66 (KDLNT) lines the substrate pocket. A glycan (N-linked (GlcNAc...) asparagine) is linked at N114. H150 serves as the catalytic Proton donor.

It belongs to the pancreatic ribonuclease family.

The catalysed reaction is an [RNA] containing cytidine + H2O = an [RNA]-3'-cytidine-3'-phosphate + a 5'-hydroxy-ribonucleotide-3'-[RNA].. The enzyme catalyses an [RNA] containing uridine + H2O = an [RNA]-3'-uridine-3'-phosphate + a 5'-hydroxy-ribonucleotide-3'-[RNA].. This is a non-secretory ribonuclease. It is a pyrimidine specific nuclease with a slight preference for U. Cytotoxin and helminthotoxin. Possesses a wide variety of biological activities. This is Ribonuclease 2B from Mus musculus (Mouse).